The sequence spans 151 residues: Protein SprT-like (151 aa).

Positions 6–147 constitute a SprT-like domain; sequence LQRMVENLSE…GHCNGKLRMK (142 aa). Histidine 67 serves as a coordination point for Zn(2+). Glutamate 68 is a catalytic residue. Residue histidine 71 coordinates Zn(2+).

Belongs to the SprT family. It depends on Zn(2+) as a cofactor.

It localises to the cytoplasm. In Staphylococcus aureus (strain Mu3 / ATCC 700698), this protein is Protein SprT-like.